Reading from the N-terminus, the 317-residue chain is Multivesicular body subunit 12B (317 aa).

A disordered region spans residues 1–49; the sequence is MRSCFCVRRSRDPPPPQPPPPQRGTDQATMPEVKELSEALPETPMDPIT. The segment covering 13-22 has biased composition (pro residues); sequence PPPPQPPPPQ. The region spanning 45 to 191 is the MABP domain; the sequence is MDPITGVGVV…SMGIWYRMGR (147 aa). Ser99 carries the phosphoserine modification. Phosphothreonine occurs at positions 120, 202, and 203. Residues 193–218 form a disordered region; sequence PRNHDSSQPTTPSQSSASSTPAPNLP. A compositionally biased stretch (low complexity) spans 198 to 214; it reads SSQPTTPSQSSASSTPA. Phosphoserine is present on Ser222. Residues 252–301 form the UMA domain; sequence MDGVPFMISEKFSCIPESMQPFDLLGITIKSLAEIEKEYEYSFRTEQSAA. The segment at 297-317 is disordered; the sequence is EQSAAARLPPSPTRCQQIPQS. Position 307 is a phosphoserine (Ser307).

It belongs to the MVB12 family. As to quaternary structure, component of the ESCRT-I complex (endosomal sorting complex required for transport I) which consists of TSG101, VPS28, a VPS37 protein (VPS37A to -D) and MVB12A or MVB12B in a 1:1:1:1 stoichiometry. Interacts with TSG101; the association appears to be mediated by the TSG101-VPS37 binary subcomplex. Interacts with VPS28. Interacts with VPS37B; the association appears to be mediated by the TSG101-VPS37 binary subcomplex. Interacts with VPS37C; the association appears to be mediated by the TSG101-VPS37 binary subcomplex.

The protein resides in the endosome. It is found in the late endosome membrane. Functionally, component of the ESCRT-I complex, a regulator of vesicular trafficking process. Required for the sorting of endocytic ubiquitinated cargos into multivesicular bodies. The sequence is that of Multivesicular body subunit 12B (Mvb12b) from Mus musculus (Mouse).